Consider the following 116-residue polypeptide: uncharacterized protein (116 aa).

The tract at residues 97–116 (AKGKGNEGREEAEEASGKSK) is disordered. The segment covering 100–116 (KGNEGREEAEEASGKSK) has biased composition (basic and acidic residues).

It belongs to the UPF0440 family.

This is an uncharacterized protein from Pyrococcus horikoshii (strain ATCC 700860 / DSM 12428 / JCM 9974 / NBRC 100139 / OT-3).